Here is a 74-residue protein sequence, read N- to C-terminus: UPF0435 protein BCB4264_A0471 (74 aa).

Belongs to the UPF0435 family.

This chain is UPF0435 protein BCB4264_A0471, found in Bacillus cereus (strain B4264).